The following is a 259-amino-acid chain: Ribonuclease PH (259 aa).

Residues R88 and 126-128 (GTR) contribute to the phosphate site.

Belongs to the RNase PH family. Homohexameric ring arranged as a trimer of dimers.

The enzyme catalyses tRNA(n+1) + phosphate = tRNA(n) + a ribonucleoside 5'-diphosphate. Its function is as follows. Phosphorolytic 3'-5' exoribonuclease that plays an important role in tRNA 3'-end maturation. Removes nucleotide residues following the 3'-CCA terminus of tRNAs; can also add nucleotides to the ends of RNA molecules by using nucleoside diphosphates as substrates, but this may not be physiologically important. Probably plays a role in initiation of 16S rRNA degradation (leading to ribosome degradation) during starvation. This chain is Ribonuclease PH, found in Mycobacterium ulcerans (strain Agy99).